Reading from the N-terminus, the 79-residue chain is Sec-independent protein translocase protein TatA (79 aa).

The helical transmembrane segment at 1-21 (MGSLSIWHWIVVIAVVLLLFG) threads the bilayer. The span at 43 to 60 (LQDDEKTAEKPDPVKSID) shows a compositional bias: basic and acidic residues. The tract at residues 43–79 (LQDDEKTAEKPDPVKSIDHNAPTAAAPTRTDVGSKAV) is disordered.

The protein belongs to the TatA/E family. In terms of assembly, the Tat system comprises two distinct complexes: a TatABC complex, containing multiple copies of TatA, TatB and TatC subunits, and a separate TatA complex, containing only TatA subunits. Substrates initially bind to the TatABC complex, which probably triggers association of the separate TatA complex to form the active translocon.

The protein localises to the cell inner membrane. Functionally, part of the twin-arginine translocation (Tat) system that transports large folded proteins containing a characteristic twin-arginine motif in their signal peptide across membranes. TatA could form the protein-conducting channel of the Tat system. This Rhodopseudomonas palustris (strain BisB5) protein is Sec-independent protein translocase protein TatA.